The following is a 226-amino-acid chain: MEGNGSIDMFSEVLENQFLQAAKLVENHLDSEIQKLDQIGEDELELLKEKRLAALRKAQQQKQEWLSKGHGEYREIGSERDFFQEVKESEKVVCHFYRDTTFRCKILDRHLAILAKKHLETKFLKPNVEKAPFLCERLRIKVIPTLALLRDGKTQDYIVGFTDLGNTDDFTTETLEWRLGCSDVINYSGNLMEPPFQSQKKFGTNFTKLEKKTIRGKKYDSDSDDD.

Residues 75-180 (EIGSERDFFQ…TTETLEWRLG (106 aa)) form the Thioredoxin domain. A phosphoserine mark is found at Ser188, Ser221, and Ser223.

Forms ternary complexes with the chaperonin TCP1 complex, spanning the cylindrical chaperonin cavity and contacting at least 2 subunits.

The protein localises to the cytoplasm. The protein resides in the nucleus. It is found in the cytoskeleton. Its subcellular location is the microtubule organizing center. It localises to the centrosome. The protein localises to the midbody. Its function is as follows. Significantly diminishes the chaperonin TCP1 complex ATPase activity, thus negatively impacts protein folding, including that of actin or tubulin. The polypeptide is Thioredoxin domain-containing protein 9 (Txndc9) (Rattus norvegicus (Rat)).